A 379-amino-acid polypeptide reads, in one-letter code: tRNA-specific 2-thiouridylase MnmA (379 aa).

ATP-binding positions include 6–13 (AMSGGVDS) and Leu-32. The active-site Nucleophile is Cys-101. Residues Cys-101 and Cys-199 are joined by a disulfide bond. Gly-125 contributes to the ATP binding site. Residues 148-150 (KDQ) form an interaction with tRNA region. Cys-199 serves as the catalytic Cysteine persulfide intermediate.

Belongs to the MnmA/TRMU family.

Its subcellular location is the cytoplasm. It carries out the reaction S-sulfanyl-L-cysteinyl-[protein] + uridine(34) in tRNA + AH2 + ATP = 2-thiouridine(34) in tRNA + L-cysteinyl-[protein] + A + AMP + diphosphate + H(+). In terms of biological role, catalyzes the 2-thiolation of uridine at the wobble position (U34) of tRNA, leading to the formation of s(2)U34. This is tRNA-specific 2-thiouridylase MnmA from Paenarthrobacter aurescens (strain TC1).